An 898-amino-acid polypeptide reads, in one-letter code: Phosphoenolpyruvate carboxylase (898 aa).

Active-site residues include histidine 138 and lysine 561.

Belongs to the PEPCase type 1 family. Mg(2+) is required as a cofactor.

The catalysed reaction is oxaloacetate + phosphate = phosphoenolpyruvate + hydrogencarbonate. Its function is as follows. Forms oxaloacetate, a four-carbon dicarboxylic acid source for the tricarboxylic acid cycle. The sequence is that of Phosphoenolpyruvate carboxylase from Streptococcus pneumoniae serotype 4 (strain ATCC BAA-334 / TIGR4).